The primary structure comprises 1488 residues: Indigoidine synthase (1488 aa).

The adenylation stretch occupies residues 229 to 585; the sequence is KNRAQRHPEQ…GGDGVARGYL (357 aa). The Carrier domain occupies 1137 to 1212; that stretch reads APRNPLEHQV…KLAAWLSRAR (76 aa). Serine 1172 carries the O-(pantetheine 4'-phosphoryl)serine modification. The thioesterase stretch occupies residues 1230–1346; that stretch reads PIYCWPGLGG…ERVAAMNRKA (117 aa).

It belongs to the ATP-dependent AMP-binding enzyme family. It depends on pantetheine 4'-phosphate as a cofactor.

It carries out the reaction 2 FMN + 2 L-glutamine + 2 ATP + O2 = indigoidine + 2 FMNH2 + 2 AMP + 2 diphosphate + 2 H2O. The enzyme catalyses FMN + L-glutamine + ATP = 3-amino-1,5-dihydropyridine-2,6-dione + FMNH2 + AMP + diphosphate. The catalysed reaction is 2 3-amino-1,5-dihydropyridine-2,6-dione + O2 = indigoidine + 2 H2O. It participates in pigment biosynthesis. Its function is as follows. Nonribosomal peptide synthetase involved in the biosynthesis of the blue pigment indigoidine, which is implicated in pathogenicity and protection from oxidative stress. Catalyzes the synthesis of the blue pigment using L-Gln as a substrate. Two glutamine molecules are cyclized and oxidized to form indigoidine. The chain is Indigoidine synthase from Dickeya dadantii (strain 3937) (Erwinia chrysanthemi (strain 3937)).